Reading from the N-terminus, the 291-residue chain is ATP synthase gamma chain (291 aa).

Belongs to the ATPase gamma chain family. As to quaternary structure, F-type ATPases have 2 components, CF(1) - the catalytic core - and CF(0) - the membrane proton channel. CF(1) has five subunits: alpha(3), beta(3), gamma(1), delta(1), epsilon(1). CF(0) has three main subunits: a, b and c.

The protein localises to the cell inner membrane. Its function is as follows. Produces ATP from ADP in the presence of a proton gradient across the membrane. The gamma chain is believed to be important in regulating ATPase activity and the flow of protons through the CF(0) complex. The polypeptide is ATP synthase gamma chain (Variovorax paradoxus (strain S110)).